Reading from the N-terminus, the 209-residue chain is Large ribosomal subunit protein uL3 (209 aa).

An N5-methylglutamine modification is found at Q150.

It belongs to the universal ribosomal protein uL3 family. As to quaternary structure, part of the 50S ribosomal subunit. Forms a cluster with proteins L14 and L19. In terms of processing, methylated by PrmB.

One of the primary rRNA binding proteins, it binds directly near the 3'-end of the 23S rRNA, where it nucleates assembly of the 50S subunit. The chain is Large ribosomal subunit protein uL3 from Aliivibrio salmonicida (strain LFI1238) (Vibrio salmonicida (strain LFI1238)).